The chain runs to 416 residues: CinA-like protein (416 aa).

This sequence belongs to the CinA family.

This chain is CinA-like protein, found in Nostoc punctiforme (strain ATCC 29133 / PCC 73102).